The following is a 632-amino-acid chain: tRNA uridine 5-carboxymethylaminomethyl modification enzyme MnmG (632 aa).

Residues G15–G20, V127, and S182 each bind FAD. Residues T203 to P226 form a disordered region. The span at S215 to P226 shows a compositional bias: basic and acidic residues. Residue G274–F288 coordinates NAD(+). Residue Q371 participates in FAD binding.

This sequence belongs to the MnmG family. As to quaternary structure, homodimer. Heterotetramer of two MnmE and two MnmG subunits. FAD is required as a cofactor.

Its subcellular location is the cytoplasm. In terms of biological role, NAD-binding protein involved in the addition of a carboxymethylaminomethyl (cmnm) group at the wobble position (U34) of certain tRNAs, forming tRNA-cmnm(5)s(2)U34. The chain is tRNA uridine 5-carboxymethylaminomethyl modification enzyme MnmG from Listeria monocytogenes serotype 4b (strain F2365).